The sequence spans 208 residues: MVSRRVQALLEQLRAQGIQDEQVLNALAAVPREKFVDEAFEQKAWDNIALPIGQGQTISQPYMVARMTELLELTPQSRVLEIGTGSGYQTAILAHLVQHVCSVERIKGLQWQARRRLKNLDLHNVSTRHGDGWQGWQARAPFDAIIVTAAPPEIPTALMTQLDEGGILVLPVGEEHQYLKRVRRRGGEFIIDTVEAVRFVPLVKGELA.

Ser59 is an active-site residue.

Belongs to the methyltransferase superfamily. L-isoaspartyl/D-aspartyl protein methyltransferase family.

It is found in the cytoplasm. The catalysed reaction is [protein]-L-isoaspartate + S-adenosyl-L-methionine = [protein]-L-isoaspartate alpha-methyl ester + S-adenosyl-L-homocysteine. In terms of biological role, catalyzes the methyl esterification of L-isoaspartyl residues in peptides and proteins that result from spontaneous decomposition of normal L-aspartyl and L-asparaginyl residues. It plays a role in the repair and/or degradation of damaged proteins. This chain is Protein-L-isoaspartate O-methyltransferase, found in Shigella sonnei (strain Ss046).